Here is a 147-residue protein sequence, read N- to C-terminus: Large ribosomal subunit protein bL9 (147 aa).

The segment at 44–63 (VKTLDAQKRSEDKRKEQEKL) is disordered. The segment covering 48–63 (DAQKRSEDKRKEQEKL) has biased composition (basic and acidic residues).

It belongs to the bacterial ribosomal protein bL9 family.

In terms of biological role, binds to the 23S rRNA. This Brevibacillus brevis (strain 47 / JCM 6285 / NBRC 100599) protein is Large ribosomal subunit protein bL9.